The chain runs to 190 residues: Dynactin subunit 6 (190 aa).

Thr186 is subject to Phosphothreonine; by CDK1.

Belongs to the dynactin subunits 5/6 family. Dynactin subunit 6 subfamily. Subunit of dynactin, a multiprotein complex part of a tripartite complex with dynein and a adapter, such as BICDL1, BICD2 or HOOK3. The dynactin complex is built around ACTR1A/ACTB filament and consists of an actin-related filament composed of a shoulder domain, a pointed end and a barbed end. Its length is defined by its flexible shoulder domain. The soulder is composed of 2 DCTN1 subunits, 4 DCTN2 and 2 DCTN3. The 4 DCNT2 (via N-terminus) bind the ACTR1A filament and act as molecular rulers to determine the length. The pointed end is important for binding dynein-dynactin cargo adapters. Consists of 4 subunits: ACTR10, DCNT4, DCTN5 and DCTN6. Within the complex DCTN6 forms a heterodimer with DCTN5. The barbed end is composed of a CAPZA1:CAPZB heterodimers, which binds ACTR1A/ACTB filament and dynactin and stabilizes dynactin. Interacts with PLK1. Interacts with N4BP2L1. Post-translationally, phosphorylation at Thr-186 by CDK1 during mitotic prometaphase creates a binding site for PLK1 that facilitates its recruitment to kinetochores. Ubiquitous.

The protein resides in the cytoplasm. The protein localises to the cytoskeleton. Its subcellular location is the chromosome. It localises to the centromere. It is found in the kinetochore. Part of the dynactin complex that activates the molecular motor dynein for ultra-processive transport along microtubules. This chain is Dynactin subunit 6, found in Homo sapiens (Human).